An 804-amino-acid polypeptide reads, in one-letter code: Cas scaffolding protein family member 4 (804 aa).

The 63-residue stretch at 11 to 73 (PKTLLARALY…PANRLQVLRE (63 aa)) folds into the SH3 domain. Phosphoserine is present on residues serine 200 and serine 297. Disordered stretches follow at residues 369–395 (LERG…DSDR), 607–628 (QRET…TEHS), and 642–686 (QQSP…TERK). A compositionally biased stretch (polar residues) spans 380–390 (PWISGQTSFLS). Basic and acidic residues predominate over residues 649-664 (EKGKPTMEGKSNRNPD).

Belongs to the CAS family. As to quaternary structure, interacts (via SH3 domain) with PTK2/FAK1 (via C-terminus). Phosphorylated on tyrosines by SRC.

It localises to the cytoplasm. Its subcellular location is the cytoskeleton. The protein resides in the cell junction. It is found in the focal adhesion. Its function is as follows. Docking protein that plays a role in tyrosine kinase-based signaling related to cell adhesion and cell spreading. Regulates PTK2/FAK1 activity, focal adhesion integrity, and cell spreading. This is Cas scaffolding protein family member 4 from Mus musculus (Mouse).